A 288-amino-acid chain; its full sequence is Homoserine kinase (288 aa).

78 to 88 (PLARGLGSSSS) contributes to the ATP binding site.

The protein belongs to the GHMP kinase family. Homoserine kinase subfamily.

The protein localises to the cytoplasm. It carries out the reaction L-homoserine + ATP = O-phospho-L-homoserine + ADP + H(+). Its pathway is amino-acid biosynthesis; L-threonine biosynthesis; L-threonine from L-aspartate: step 4/5. Its function is as follows. Catalyzes the ATP-dependent phosphorylation of L-homoserine to L-homoserine phosphate. The sequence is that of Homoserine kinase from Streptococcus agalactiae serotype V (strain ATCC BAA-611 / 2603 V/R).